A 142-amino-acid chain; its full sequence is Hemoglobin subunit zeta (142 aa).

Residue S2 is modified to N-acetylserine. In terms of domain architecture, Globin spans 2–142; the sequence is SLTRTERTII…VSGVLTEKYR (141 aa). Phosphothreonine is present on T29. At S53 the chain carries Phosphoserine. Heme b is bound at residue H59. Residues S73 and S82 each carry the phosphoserine modification. H88 contributes to the heme b binding site.

The protein belongs to the globin family. In terms of assembly, heterotetramer of two zeta chains and beta-type chains.

The zeta chain is an alpha-type chain of mammalian embryonic hemoglobin. This is Hemoglobin subunit zeta (HBZ1) from Capra hircus (Goat).